Reading from the N-terminus, the 527-residue chain is Optineurin (527 aa).

Disordered stretches follow at residues 1-32 (MSHQ…HPNL) and 101-143 (SHEN…KDQL). Residues 38-170 (EELLQQMKEL…VSELQLKLNS (133 aa)) are a coiled coil. An interaction with Rab8 region spans residues 58–209 (MKLNNQAMKG…GPTRTVSTSR (152 aa)). The LIR signature appears at 176-181 (DSFVEI). S177 is modified (phosphoserine; by TBK1). The span at 186-197 (GEAEGSVKEIKH) shows a compositional bias: basic and acidic residues. Disordered regions lie at residues 186 to 214 (GEAE…LSKY) and 262 to 292 (SDFE…EKGL). A Phosphoserine modification is found at S198. The span at 201–210 (PTRTVSTSRA) shows a compositional bias: polar residues. A coiled-coil region spans residues 239–458 (CLREGNQKVE…LLKENDAFED (220 aa)). Composition is skewed to basic and acidic residues over residues 262-274 (SDFE…RSEI) and 281-292 (STEKENDEEKGL). The interval 361-527 (TRKESEKVDR…LQIHVMDCII (167 aa)) is interaction with HD. Positions 362–470 (RKESEKVDRA…RQSLMEMQSR (109 aa)) are interaction with MYO6. The UBAN motif lies at 424 to 429 (DFHAER). Residue S476 is modified to Phosphoserine. A CCHC NOA-type zinc finger spans residues 497-527 (QRNIPIHSCPKCGEVLPDIDTLQIHVMDCII). The Zn(2+) site is built by C505, C508, H521, and C525.

In terms of assembly, self-associates. Interacts with HD. Interacts with GTF3A. Interacts with MYO6. Interacts (via UBAN) with ubiquitinated TFRC. Interacts with GTP-bound Rab8 (RAB8A and/or RAB8B). Interacts with TBC1D17. Interacts with TBK1. Interacts with TRAF3. Binds to linear ubiquitin chains. Interacts with LC3 family members MAP1LC3A, MAP1LC3B, GABARAP, GABARAPL1 and GABARAPL2; OPTN phosphorylation increases the association (at least with MAP1LC3B). Interacts with RAB12; the interaction may be indirect. Interacts with TBK1; this interaction leads to the Golgi localization of TBK1 and its subsequent activation. Interacts with palmitoyltransferase ZDHHC17/HIP14; the interaction does not lead to palmitoylation of OPTN. Interacts with CYLD. Interacts with TOM1; the interaction is indirect and is mediated by MYO6, which acts as a bridge between TOM1 and OPTN. Interacts with USP12; the interaction is independent of USP12 deubiquitinase activity and may be involved in regulation of autophagic flux. In terms of processing, phosphorylated by TBK1, leading to restrict bacterial proliferation in case of infection.

It localises to the cytoplasm. It is found in the perinuclear region. The protein localises to the golgi apparatus. The protein resides in the trans-Golgi network. Its subcellular location is the cytoplasmic vesicle. It localises to the autophagosome. It is found in the recycling endosome. Functionally, plays an important role in the maintenance of the Golgi complex, in membrane trafficking, in exocytosis, through its interaction with myosin VI and Rab8. Links myosin VI to the Golgi complex and plays an important role in Golgi ribbon formation. Negatively regulates the induction of IFNB in response to RNA virus infection. Plays a neuroprotective role in the eye and optic nerve. Probably part of the TNF-alpha signaling pathway that can shift the equilibrium toward induction of cell death. May act by regulating membrane trafficking and cellular morphogenesis via a complex that contains Rab8 and huntingtin (HD). Mediates the interaction of Rab8 with the probable GTPase-activating protein TBC1D17 during Rab8-mediated endocytic trafficking, such as that of transferrin receptor (TFRC/TfR); regulates Rab8 recruitment to tubules emanating from the endocytic recycling compartment. Autophagy receptor that interacts directly with both the cargo to become degraded and an autophagy modifier of the MAP1 LC3 family; targets ubiquitin-coated bacteria (xenophagy) and appears to function in the same pathway as SQSTM1 and CALCOCO2/NDP52. This Pongo abelii (Sumatran orangutan) protein is Optineurin (OPTN).